A 955-amino-acid polypeptide reads, in one-letter code: GPI inositol-deacylase B (955 aa).

Residue Asn-7 is glycosylated (N-linked (GlcNAc...) asparagine). The chain crosses the membrane as a helical span at residues 8–28; it reads ASVALWTVFTILTIWISFALH. Residue Ser-180 is part of the active site. Asn-431 carries an N-linked (GlcNAc...) asparagine glycan. The next 4 helical transmembrane spans lie at 489-509, 600-620, 643-663, and 703-723; these read IAFP…SGGV, LLFS…FWRY, YLSW…FEFI, and PIGV…VVVV. The N-linked (GlcNAc...) asparagine glycan is linked to Asn-753. The next 3 membrane-spanning stretches (helical) occupy residues 772 to 792, 840 to 860, and 870 to 890; these read VIIA…LAFA, TMSV…AVWV, and IFSS…IENL. Residue Asn-914 is glycosylated (N-linked (GlcNAc...) asparagine). The helical transmembrane segment at 919–939 threads the bilayer; the sequence is GMMHAFMIHHWFNLLAGWLLI. Residue Asn-945 is glycosylated (N-linked (GlcNAc...) asparagine).

The protein belongs to the GPI inositol-deacylase family.

It is found in the endoplasmic reticulum membrane. Its function is as follows. Involved in inositol deacylation of GPI-anchored proteins which plays important roles in the quality control and ER-associated degradation of GPI-anchored proteins. This is GPI inositol-deacylase B (BST1B) from Yarrowia lipolytica (strain CLIB 122 / E 150) (Yeast).